The chain runs to 193 residues: Acyl carrier protein phosphodiesterase (193 aa).

It belongs to the AcpH family.

It catalyses the reaction holo-[ACP] + H2O = apo-[ACP] + (R)-4'-phosphopantetheine + H(+). In terms of biological role, converts holo-ACP to apo-ACP by hydrolytic cleavage of the phosphopantetheine prosthetic group from ACP. The sequence is that of Acyl carrier protein phosphodiesterase from Escherichia coli O139:H28 (strain E24377A / ETEC).